The chain runs to 586 residues: A-type ATP synthase subunit A (586 aa).

Residue 232–239 participates in ATP binding; that stretch reads GPFGSGKT.

Belongs to the ATPase alpha/beta chains family. Has multiple subunits with at least A(3), B(3), C, D, E, F, H, I and proteolipid K(x).

The protein resides in the cell membrane. It catalyses the reaction ATP + H2O + 4 H(+)(in) = ADP + phosphate + 5 H(+)(out). In terms of biological role, component of the A-type ATP synthase that produces ATP from ADP in the presence of a proton gradient across the membrane. The A chain is the catalytic subunit. The sequence is that of A-type ATP synthase subunit A from Methanococcus maripaludis (strain C5 / ATCC BAA-1333).